A 586-amino-acid chain; its full sequence is Arginine--tRNA ligase (586 aa).

The short motif at 131–141 (ANPTGPMHVGH) is the 'HIGH' region element.

Belongs to the class-I aminoacyl-tRNA synthetase family. In terms of assembly, monomer.

It localises to the cytoplasm. It catalyses the reaction tRNA(Arg) + L-arginine + ATP = L-arginyl-tRNA(Arg) + AMP + diphosphate. The chain is Arginine--tRNA ligase from Rhizobium rhizogenes (strain K84 / ATCC BAA-868) (Agrobacterium radiobacter).